Here is a 406-residue protein sequence, read N- to C-terminus: Kelch domain-containing protein 2 (406 aa).

Kelch repeat units follow at residues 31–85, 92–136, 148–207, 221–259, 271–311, and 322–359; these read ERSG…NTEG, SGSC…ERID, LGVW…TWSQ, HACATVGNRGFVFGGRYRDARMNDLHYLNLDTWEWNELI, HSLT…IQFN, and HTACASDEGEVIVFGGCANNLLVHHRAAHSNEILIFSV.

In terms of assembly, component of a CRL2(KLHDC2) E3 ubiquitin-protein ligase complex, also named ECS(KLHDC2) complex, composed of CUL2, Elongin BC (ELOB and ELOC), RBX1 and substrate-specific adapter KLHDC2. May form oligomers as a KLHDC2-ELOB-ELOC complex; this interaction is autoinhibitory for the E3 ligase complex as the substrate-binding site of KLHDC2 is blocked in the oligomer. Interacts with CREB3; interaction is direct and specific as it does not interact with CREB1, ATF4, ATF6, JUN, FOS, CEBPA or herpes simplex virus transactivator VP16. In terms of processing, autoubiquitinated by the CRL2(KLHDC2) E3 ligase complex. In terms of tissue distribution, widely expressed, with high levels in skeletal muscle, heart, pancreas and liver. Undetectable in peripheral blood leukocytes.

The protein localises to the nucleus. Its pathway is protein modification; protein ubiquitination. Its function is as follows. Substrate-recognition component of a Cul2-RING (CRL2) E3 ubiquitin-protein ligase complex of the DesCEND (destruction via C-end degrons) pathway, which recognizes a C-degron located at the extreme C terminus of target proteins, leading to their ubiquitination and degradation. The C-degron recognized by the DesCEND pathway is usually a motif of less than ten residues and can be present in full-length proteins, truncated proteins or proteolytically cleaved forms. The CRL2(KLHDC2) complex specifically recognizes proteins with a diglycine (Gly-Gly) at the C-terminus, leading to their ubiquitination and degradation. The CRL2(KLHDC2) complex mediates ubiquitination and degradation of truncated SELENOK and SELENOS selenoproteins produced by failed UGA/Sec decoding, which end with a diglycine. The CRL2(KLHDC2) complex also recognizes proteolytically cleaved proteins ending with Gly-Gly, such as the N-terminal fragment of USP1, leading to their degradation. May also act as an indirect repressor of CREB3-mediated transcription by interfering with CREB3-DNA-binding. The protein is Kelch domain-containing protein 2 of Homo sapiens (Human).